A 298-amino-acid polypeptide reads, in one-letter code: Phosphatidylserine decarboxylase proenzyme (298 aa).

Residues aspartate 113, histidine 169, and serine 256 each act as charge relay system; for autoendoproteolytic cleavage activity in the active site. The active-site Schiff-base intermediate with substrate; via pyruvic acid; for decarboxylase activity is serine 256. Position 256 is a pyruvic acid (Ser); by autocatalysis (serine 256).

This sequence belongs to the phosphatidylserine decarboxylase family. PSD-B subfamily. Prokaryotic type II sub-subfamily. In terms of assembly, heterodimer of a large membrane-associated beta subunit and a small pyruvoyl-containing alpha subunit. Pyruvate serves as cofactor. In terms of processing, is synthesized initially as an inactive proenzyme. Formation of the active enzyme involves a self-maturation process in which the active site pyruvoyl group is generated from an internal serine residue via an autocatalytic post-translational modification. Two non-identical subunits are generated from the proenzyme in this reaction, and the pyruvate is formed at the N-terminus of the alpha chain, which is derived from the carboxyl end of the proenzyme. The autoendoproteolytic cleavage occurs by a canonical serine protease mechanism, in which the side chain hydroxyl group of the serine supplies its oxygen atom to form the C-terminus of the beta chain, while the remainder of the serine residue undergoes an oxidative deamination to produce ammonia and the pyruvoyl prosthetic group on the alpha chain. During this reaction, the Ser that is part of the protease active site of the proenzyme becomes the pyruvoyl prosthetic group, which constitutes an essential element of the active site of the mature decarboxylase.

It is found in the cell membrane. It catalyses the reaction a 1,2-diacyl-sn-glycero-3-phospho-L-serine + H(+) = a 1,2-diacyl-sn-glycero-3-phosphoethanolamine + CO2. Its pathway is phospholipid metabolism; phosphatidylethanolamine biosynthesis; phosphatidylethanolamine from CDP-diacylglycerol: step 2/2. In terms of biological role, catalyzes the formation of phosphatidylethanolamine (PtdEtn) from phosphatidylserine (PtdSer). The chain is Phosphatidylserine decarboxylase proenzyme from Desulfitobacterium hafniense (strain Y51).